Here is a 2067-residue protein sequence, read N- to C-terminus: Separin (2067 aa).

Disordered stretches follow at residues 51–91, 140–167, 1316–1363, and 1449–1478; these read RTAR…AQDV, KKDA…TDNE, DLEE…SVEA, and LEPK…TKAQ. The span at 55-86 shows a compositional bias: low complexity; that stretch reads GTKATATNATASSRAKTTRTKSTSTSTTRTKT. Low complexity-rich tracts occupy residues 1333–1354 and 1449–1461; these read TRQP…ARST and LEPK…SSKS. The region spanning 1880–1975 is the Peptidase C50 domain; sequence RRNGTYILNP…SGTLTEAGEY (96 aa). The active site involves Cys-1964.

Its subcellular location is the nucleus. It carries out the reaction All bonds known to be hydrolyzed by this endopeptidase have arginine in P1 and an acidic residue in P4. P6 is often occupied by an acidic residue or by a hydroxy-amino-acid residue, the phosphorylation of which enhances cleavage.. Required for nuclear division. Could function in the mitotic spindle. This chain is Separin (bimB), found in Emericella nidulans (strain FGSC A4 / ATCC 38163 / CBS 112.46 / NRRL 194 / M139) (Aspergillus nidulans).